The sequence spans 349 residues: Heat-inducible transcription repressor HrcA (349 aa).

It belongs to the HrcA family.

Functionally, negative regulator of class I heat shock genes (grpE-dnaK-dnaJ and groELS operons). Prevents heat-shock induction of these operons. This Mycoplasmoides gallisepticum (strain R(low / passage 15 / clone 2)) (Mycoplasma gallisepticum) protein is Heat-inducible transcription repressor HrcA.